Consider the following 456-residue polypeptide: Bifunctional protein GlmU (456 aa).

The tract at residues 1–229 is pyrophosphorylase; that stretch reads MSNSAMSVVI…LSEVEGVNNR (229 aa). UDP-N-acetyl-alpha-D-glucosamine contacts are provided by residues 11 to 14, Lys25, Gln76, 81 to 82, 103 to 105, Gly140, Glu154, Asn169, and Asn227; these read LAAG, GT, and YGD. Asp105 provides a ligand contact to Mg(2+). Position 227 (Asn227) interacts with Mg(2+). The segment at 230–250 is linker; sequence LQLARLERVYQAEQAEKLLLA. The interval 251–456 is N-acetyltransferase; that stretch reads GVMLRDPARF…QGWQRPVKKK (206 aa). Residues Arg333 and Lys351 each contribute to the UDP-N-acetyl-alpha-D-glucosamine site. Catalysis depends on His363, which acts as the Proton acceptor. The UDP-N-acetyl-alpha-D-glucosamine site is built by Tyr366 and Asn377. Residues Ala380, 386 to 387, Ser405, Ala423, and Arg440 contribute to the acetyl-CoA site; that span reads NY.

The protein in the N-terminal section; belongs to the N-acetylglucosamine-1-phosphate uridyltransferase family. This sequence in the C-terminal section; belongs to the transferase hexapeptide repeat family. Homotrimer. Requires Mg(2+) as cofactor.

The protein localises to the cytoplasm. It carries out the reaction alpha-D-glucosamine 1-phosphate + acetyl-CoA = N-acetyl-alpha-D-glucosamine 1-phosphate + CoA + H(+). The enzyme catalyses N-acetyl-alpha-D-glucosamine 1-phosphate + UTP + H(+) = UDP-N-acetyl-alpha-D-glucosamine + diphosphate. Its pathway is nucleotide-sugar biosynthesis; UDP-N-acetyl-alpha-D-glucosamine biosynthesis; N-acetyl-alpha-D-glucosamine 1-phosphate from alpha-D-glucosamine 6-phosphate (route II): step 2/2. It functions in the pathway nucleotide-sugar biosynthesis; UDP-N-acetyl-alpha-D-glucosamine biosynthesis; UDP-N-acetyl-alpha-D-glucosamine from N-acetyl-alpha-D-glucosamine 1-phosphate: step 1/1. It participates in bacterial outer membrane biogenesis; LPS lipid A biosynthesis. Catalyzes the last two sequential reactions in the de novo biosynthetic pathway for UDP-N-acetylglucosamine (UDP-GlcNAc). The C-terminal domain catalyzes the transfer of acetyl group from acetyl coenzyme A to glucosamine-1-phosphate (GlcN-1-P) to produce N-acetylglucosamine-1-phosphate (GlcNAc-1-P), which is converted into UDP-GlcNAc by the transfer of uridine 5-monophosphate (from uridine 5-triphosphate), a reaction catalyzed by the N-terminal domain. The protein is Bifunctional protein GlmU of Klebsiella pneumoniae subsp. pneumoniae (strain ATCC 700721 / MGH 78578).